Here is a 522-residue protein sequence, read N- to C-terminus: DNA damage-binding protein cmr1 (522 aa).

Residues 34 to 47 (VFTPTLPNRATGSQ) are compositionally biased toward polar residues. Disordered stretches follow at residues 34 to 89 (VFTP…KRKA) and 217 to 239 (QEKP…DPVL). The segment covering 49 to 59 (KTKKKPAPKKV) has biased composition (basic residues). The WD 1 repeat unit spans residues 182 to 223 (LTPERVYTMTFHPSETKPLIFAGDKMGHLGILDASQEKPTSV). The span at 226–236 (EDEDEEDDDPD) shows a compositional bias: acidic residues. WD repeat units lie at residues 244–284 (PHTR…SVER), 294–331 (VPLS…QGSV), 336–376 (LSEK…RREP), 381–422 (EHQS…ASWK), 445–488 (GRWV…LAQL), and 491–522 (DGIT…CLWM).

The protein belongs to the WD repeat DDB2/WDR76 family.

Functionally, DNA-binding protein that binds to both single- and double-stranded DNA. Binds preferentially to UV-damaged DNA. May be involved in DNA-metabolic processes. This is DNA damage-binding protein cmr1 from Aspergillus oryzae (strain ATCC 42149 / RIB 40) (Yellow koji mold).